We begin with the raw amino-acid sequence, 476 residues long: G-patch domain and KOW motifs-containing protein (476 aa).

Positions Met1 to Leu96 are disordered. An N-acetylalanine modification is found at Ala2. Residue Lys5 forms a Glycyl lysine isopeptide (Lys-Gly) (interchain with G-Cter in SUMO2) linkage. The segment covering Ala13–Thr26 has biased composition (polar residues). At Ser27 the chain carries Phosphoserine; by PKA. A phosphoserine mark is found at Ser35 and Ser42. Over residues Pro43–Gln58 the composition is skewed to basic and acidic residues. Ser115 bears the Phosphoserine mark. In terms of domain architecture, G-patch spans Val164–Thr210. Residues Leu203–Gly244 form a disordered region. A compositionally biased stretch (polar residues) spans Thr210 to Gly219. At Thr216 the chain carries Phosphothreonine. A compositionally biased stretch (basic and acidic residues) spans Pro224–Gln237. A KOW 1 domain is found at Gly240–Asp267. Thr316 carries the phosphothreonine; by PKA modification. The interval Asp327–Arg353 is disordered. The segment covering Pro337–Ala351 has biased composition (basic and acidic residues). The 28-residue stretch at Pro415–Ala442 folds into the KOW 2 domain. Ser471 carries the post-translational modification Phosphoserine. Thr473 is subject to Phosphothreonine.

Belongs to the MOS2 family. In terms of assembly, component of the minor spliceosome, which splices U12-type introns. Interacts with PRKX. Interacts with DHX16. Interacts with PRKACB. Post-translationally, phosphorylation regulates its ability to bind RNA.

Its subcellular location is the nucleus. Its function is as follows. RNA-binding protein involved in pre-mRNA splicing. As a component of the minor spliceosome, involved in the splicing of U12-type introns in pre-mRNAs. The chain is G-patch domain and KOW motifs-containing protein (GPKOW) from Homo sapiens (Human).